A 356-amino-acid chain; its full sequence is GTPase Obg (356 aa).

One can recognise an Obg domain in the interval Glu2–Leu160. In terms of domain architecture, OBG-type G spans Ala161 to Phe329. GTP contacts are provided by residues Gly167–Ser174, Phe192–Ser196, Asp215–Gly218, Asn282–Asp285, and Ser310–Asp312. Mg(2+) is bound by residues Ser174 and Thr194.

The protein belongs to the TRAFAC class OBG-HflX-like GTPase superfamily. OBG GTPase family. As to quaternary structure, monomer. Requires Mg(2+) as cofactor.

The protein localises to the cytoplasm. Functionally, an essential GTPase which binds GTP, GDP and possibly (p)ppGpp with moderate affinity, with high nucleotide exchange rates and a fairly low GTP hydrolysis rate. Plays a role in control of the cell cycle, stress response, ribosome biogenesis and in those bacteria that undergo differentiation, in morphogenesis control. In Leptospira interrogans serogroup Icterohaemorrhagiae serovar copenhageni (strain Fiocruz L1-130), this protein is GTPase Obg.